Here is a 491-residue protein sequence, read N- to C-terminus: 3-octaprenyl-4-hydroxybenzoate carboxy-lyase (491 aa).

Mn(2+) is bound at residue N172. Residues 175–177 (IYR), 189–191 (RWL), and 194–195 (RG) contribute to the prenylated FMN site. E238 is a binding site for Mn(2+). D287 (proton donor) is an active-site residue.

The protein belongs to the UbiD family. As to quaternary structure, homohexamer. Prenylated FMN serves as cofactor. Requires Mn(2+) as cofactor.

Its subcellular location is the cell membrane. It carries out the reaction a 4-hydroxy-3-(all-trans-polyprenyl)benzoate + H(+) = a 2-(all-trans-polyprenyl)phenol + CO2. The protein operates within cofactor biosynthesis; ubiquinone biosynthesis. Catalyzes the decarboxylation of 3-octaprenyl-4-hydroxy benzoate to 2-octaprenylphenol, an intermediate step in ubiquinone biosynthesis. This is 3-octaprenyl-4-hydroxybenzoate carboxy-lyase from Histophilus somni (strain 2336) (Haemophilus somnus).